Reading from the N-terminus, the 118-residue chain is MDTLNVKGIRAYGYTGYFDAEQFLGQWFEVDLTIWIDLAKAGQSDDLNDTLNYADAVAIVQKLIRESKFKMIEKLAEAIADAILGTGKTQQVKVALTKCQAPIPDFDGDVTLEILRSR.

Residues Glu-21, Tyr-53, and 72–73 each bind substrate; that span reads IE. Residue Lys-98 is the Proton donor/acceptor of the active site.

Belongs to the DHNA family.

The enzyme catalyses 7,8-dihydroneopterin = 6-hydroxymethyl-7,8-dihydropterin + glycolaldehyde. The protein operates within cofactor biosynthesis; tetrahydrofolate biosynthesis; 2-amino-4-hydroxy-6-hydroxymethyl-7,8-dihydropteridine diphosphate from 7,8-dihydroneopterin triphosphate: step 3/4. Catalyzes the conversion of 7,8-dihydroneopterin to 6-hydroxymethyl-7,8-dihydropterin. The protein is Probable dihydroneopterin aldolase (folB) of Synechocystis sp. (strain ATCC 27184 / PCC 6803 / Kazusa).